The sequence spans 386 residues: Tryptophan--tRNA ligase (386 aa).

A 'HIGH' region motif is present at residues 82-90 (PSGPMHIGH). Positions 253–257 (KMSAS) match the 'KMSKS' region motif.

It belongs to the class-I aminoacyl-tRNA synthetase family.

It is found in the cytoplasm. The enzyme catalyses tRNA(Trp) + L-tryptophan + ATP = L-tryptophyl-tRNA(Trp) + AMP + diphosphate + H(+). In Pyrococcus horikoshii (strain ATCC 700860 / DSM 12428 / JCM 9974 / NBRC 100139 / OT-3), this protein is Tryptophan--tRNA ligase.